The chain runs to 536 residues: Lysosomal acid glucosylceramidase (536 aa).

A signal peptide spans 1 to 39 (MEFSSPSREECPKPSGRVNIMAGSLTGLLLLQAVSWASG). Cystine bridges form between C43/C55 and C57/C62. N-linked (GlcNAc...) asparagine glycosylation is found at N58, N98, and N185. E274 serves as the catalytic Proton donor. N309 carries N-linked (GlcNAc...) asparagine glycosylation. Catalysis depends on E379, which acts as the Nucleophile. N-linked (GlcNAc...) asparagine glycosylation occurs at N501.

The protein belongs to the glycosyl hydrolase 30 family. Interacts with saposin-C. Interacts with SCARB2. Interacts with TCP1. Interacts with GRN; this interaction prevents aggregation of GBA1-SCARB2 complex via interaction with HSPA1A upon stress.

The protein localises to the lysosome membrane. It carries out the reaction a beta-D-glucosyl-(1&lt;-&gt;1')-N-acylsphing-4-enine + H2O = an N-acylsphing-4-enine + D-glucose. It catalyses the reaction a beta-D-galactosyl-(1&lt;-&gt;1')-N-acylsphing-4-enine + H2O = an N-acylsphing-4-enine + D-galactose. The catalysed reaction is cholesteryl 3-beta-D-glucoside + H2O = cholesterol + D-glucose. The enzyme catalyses a beta-D-glucosyl-(1&lt;-&gt;1')-N-acylsphing-4-enine + cholesterol = cholesteryl 3-beta-D-glucoside + an N-acylsphing-4-enine. It carries out the reaction beta-D-glucosyl-N-(9Z-octadecenoyl)-sphing-4E-enine + cholesterol = N-(9Z-octadecenoyl)-sphing-4-enine + cholesteryl 3-beta-D-glucoside. It catalyses the reaction beta-D-glucosyl-N-octanoylsphing-4E-enine + cholesterol = N-octanoylsphing-4-enine + cholesteryl 3-beta-D-glucoside. The catalysed reaction is beta-D-glucosyl-N-dodecanoylsphing-4-enine + cholesterol = N-dodecanoylsphing-4-enine + cholesteryl 3-beta-D-glucoside. The enzyme catalyses beta-D-glucosyl-(1&lt;-&gt;1)-N-octadecanoylsphing-4-enine + cholesterol = N-octadecanoylsphing-4-enine + cholesteryl 3-beta-D-glucoside. It carries out the reaction beta-D-glucosyl-(1&lt;-&gt;1')-N-(15Z-tetracosenoyl)-sphing-4-enine + cholesterol = N-(15Z-tetracosenoyl)-sphing-4-enine + cholesteryl 3-beta-D-glucoside. It catalyses the reaction a beta-D-galactosyl-(1&lt;-&gt;1')-N-acylsphing-4-enine + cholesterol = cholesteryl 3-beta-D-galactoside + an N-acylsphing-4-enine. The catalysed reaction is 1-(beta-D-galactosyl)-N-dodecanoylsphing-4-enine + cholesterol = cholesteryl 3-beta-D-galactoside + N-dodecanoylsphing-4-enine. The enzyme catalyses a beta-D-xylosyl-(1&lt;-&gt;1')-N-acylsphing-4-enine + cholesterol = cholesteryl 3-beta-D-xyloside + an N-acylsphing-4-enine. It carries out the reaction beta-D-xylosyl-(1&lt;-&gt;1')-N-(9Z-octadecenoyl)-sphing-4-enine + cholesterol = cholesteryl 3-beta-D-xyloside + N-(9Z-octadecenoyl)-sphing-4-enine. It functions in the pathway steroid metabolism; cholesterol metabolism. It participates in sphingolipid metabolism. Functionally, glucosylceramidase that catalyzes, within the lysosomal compartment, the hydrolysis of glucosylceramides/GlcCers (such as beta-D-glucosyl-(1&lt;-&gt;1')-N-acylsphing-4-enine) into free ceramides (such as N-acylsphing-4-enine) and glucose. Plays a central role in the degradation of complex lipids and the turnover of cellular membranes. Through the production of ceramides, participates in the PKC-activated salvage pathway of ceramide formation. Catalyzes the glucosylation of cholesterol, through a transglucosylation reaction where glucose is transferred from GlcCer to cholesterol. GlcCer containing mono-unsaturated fatty acids (such as beta-D-glucosyl-N-(9Z-octadecenoyl)-sphing-4-enine) are preferred as glucose donors for cholesterol glucosylation when compared with GlcCer containing same chain length of saturated fatty acids (such as beta-D-glucosyl-N-octadecanoyl-sphing-4-enine). Under specific conditions, may alternatively catalyze the reverse reaction, transferring glucose from cholesteryl 3-beta-D-glucoside to ceramide. Can also hydrolyze cholesteryl 3-beta-D-glucoside producing glucose and cholesterol. Catalyzes the hydrolysis of galactosylceramides/GalCers (such as beta-D-galactosyl-(1&lt;-&gt;1')-N-acylsphing-4-enine), as well as the transfer of galactose between GalCers and cholesterol in vitro, but with lower activity than with GlcCers. Contrary to GlcCer and GalCer, xylosylceramide/XylCer (such as beta-D-xyosyl-(1&lt;-&gt;1')-N-acylsphing-4-enine) is not a good substrate for hydrolysis, however it is a good xylose donor for transxylosylation activity to form cholesteryl 3-beta-D-xyloside. This Pongo abelii (Sumatran orangutan) protein is Lysosomal acid glucosylceramidase (GBA1).